The sequence spans 277 residues: MALKHFNPITPGQRQLVIVDRSELYKGKPVKPLTEGLSKKGGRNNTGRITVRFQGGGHKRSYRFIDFKRRKLDVVGTVERLEYDPNRTAFIALIRYTDGELAYILAPQRLAVGDQVVAGNSVDVKPGNAMPLSSMPVGTIIHNVELKPGKGGQIARSAGTYAQLVGRDQGMAILRLNSGEQRLVSGACFASVGAVSNPDHGNINDGKAGRSVWRGKRPHVRGVAMNPVDHPHGGGEGRTSGGRHPVTPWGKPTKGKKTRSNKATDKFIMRSRHQRKK.

The segment at 222–277 (GVAMNPVDHPHGGGEGRTSGGRHPVTPWGKPTKGKKTRSNKATDKFIMRSRHQRKK) is disordered.

The protein belongs to the universal ribosomal protein uL2 family. Part of the 50S ribosomal subunit. Forms a bridge to the 30S subunit in the 70S ribosome.

Its function is as follows. One of the primary rRNA binding proteins. Required for association of the 30S and 50S subunits to form the 70S ribosome, for tRNA binding and peptide bond formation. It has been suggested to have peptidyltransferase activity; this is somewhat controversial. Makes several contacts with the 16S rRNA in the 70S ribosome. The chain is Large ribosomal subunit protein uL2 from Brucella canis (strain ATCC 23365 / NCTC 10854 / RM-666).